The primary structure comprises 329 residues: GTP 3',8-cyclase (329 aa).

The 227-residue stretch at 8–234 folds into the Radical SAM core domain; sequence AFARKFYYLR…QLRQRSDGPA (227 aa). Arg-17 contributes to the GTP binding site. Positions 24 and 28 each coordinate [4Fe-4S] cluster. Tyr-30 is an S-adenosyl-L-methionine binding site. A [4Fe-4S] cluster-binding site is contributed by Cys-31. Position 68 (Arg-68) interacts with GTP. S-adenosyl-L-methionine is bound at residue Gly-72. Thr-99 contacts GTP. An S-adenosyl-L-methionine-binding site is contributed by Ser-123. GTP is bound at residue Lys-160. Residue Met-194 participates in S-adenosyl-L-methionine binding. [4Fe-4S] cluster contacts are provided by Cys-257 and Cys-260. 262–264 serves as a coordination point for GTP; that stretch reads RLR. [4Fe-4S] cluster is bound at residue Cys-274.

Belongs to the radical SAM superfamily. MoaA family. As to quaternary structure, monomer and homodimer. Requires [4Fe-4S] cluster as cofactor.

It carries out the reaction GTP + AH2 + S-adenosyl-L-methionine = (8S)-3',8-cyclo-7,8-dihydroguanosine 5'-triphosphate + 5'-deoxyadenosine + L-methionine + A + H(+). It functions in the pathway cofactor biosynthesis; molybdopterin biosynthesis. Catalyzes the cyclization of GTP to (8S)-3',8-cyclo-7,8-dihydroguanosine 5'-triphosphate. The sequence is that of GTP 3',8-cyclase from Salmonella heidelberg (strain SL476).